We begin with the raw amino-acid sequence, 395 residues long: F-box/kelch-repeat protein SKIP25 (395 aa).

Positions M1–G29 are disordered. The F-box domain occupies A34–L79. 5 Kelch repeats span residues A81–P129, L147–G194, I196–E245, A246–E299, and I301–T342.

In terms of assembly, part of a SCF (ASK-cullin-F-box) protein ligase complex. Interacts with SKP1A/ASK1.

The protein localises to the nucleus. The protein operates within protein modification; protein ubiquitination. In terms of biological role, component of SCF(ASK-cullin-F-box) E3 ubiquitin ligase complexes, which may mediate the ubiquitination and subsequent proteasomal degradation of target proteins. The polypeptide is F-box/kelch-repeat protein SKIP25 (SKIP25) (Arabidopsis thaliana (Mouse-ear cress)).